Here is an 88-residue protein sequence, read N- to C-terminus: MVKLRLKRCGRKQRAVYRIVAIDVRSRREGRDLRKVGFYDPIKNQTYLNVPAILYFLEKGAQPTGTVQDILKKAEVFKELGPNQTKFN.

Belongs to the bacterial ribosomal protein bS16 family.

Its subcellular location is the plastid. The protein resides in the chloroplast. The chain is Small ribosomal subunit protein bS16c from Helianthus annuus (Common sunflower).